Here is a 404-residue protein sequence, read N- to C-terminus: Pyruvate-flavodoxin oxidoreductase (404 aa).

Belongs to the pyruvate:ferredoxin/flavodoxin oxidoreductase family.

The enzyme catalyses oxidized [flavodoxin] + pyruvate + CoA + 2 H(+) = reduced [flavodoxin] + acetyl-CoA + CO2. In terms of biological role, oxidoreductase required for the transfer of electrons from pyruvate to flavodoxin, which reduces nitrogenase. The sequence is that of Pyruvate-flavodoxin oxidoreductase (nifJ) from Nostoc sp. (strain ATCC 29151 / PCC 7119) (Anabaena sp.).